A 321-amino-acid polypeptide reads, in one-letter code: Beta-1,3-N-acetylglucosaminyltransferase manic fringe (321 aa).

At 1–7 the chain is on the cytoplasmic side; that stretch reads MQCRLPR. Residues 8-27 traverse the membrane as a helical; Signal-anchor for type II membrane protein segment; that stretch reads GLAGALLTLLCMGLLCLRYH. Residues 28 to 321 are Lumenal-facing; the sequence is LNLSPQRVQG…TPWCPQLGAR (294 aa). Residue Arg-70 coordinates substrate. N-linked (GlcNAc...) asparagine glycosylation occurs at Asn-109. 2 disulfides stabilise this stretch: Cys-110/Cys-121 and Cys-139/Cys-202. Asp-143 serves as a coordination point for substrate. Asp-144 contacts Mn(2+). N-linked (GlcNAc...) asparagine glycosylation occurs at Asn-185. The active site involves Asp-232. Mn(2+) is bound at residue His-256. The cysteines at positions 306 and 315 are disulfide-linked.

The protein belongs to the glycosyltransferase 31 family. It depends on Mn(2+) as a cofactor.

It is found in the golgi apparatus membrane. The catalysed reaction is 3-O-(alpha-L-fucosyl)-L-threonyl-[EGF-like domain protein] + UDP-N-acetyl-alpha-D-glucosamine = 3-O-(N-acetyl-beta-D-glucosaminyl-(1-&gt;3)-alpha-L-fucosyl)-L-threonyl-[EGF-like domain protein] + UDP + H(+). The enzyme catalyses 3-O-(alpha-L-fucosyl)-L-seryl-[EGF-like domain protein] + UDP-N-acetyl-alpha-D-glucosamine = 3-O-(N-acetyl-beta-D-glucosaminyl-(1-&gt;3)-alpha-L-fucosyl)-L-seryl-[EGF-like domain protein] + UDP + H(+). Its function is as follows. Glycosyltransferase that initiates the elongation of O-linked fucose residues attached to EGF-like repeats in the extracellular domain of Notch molecules. Modulates NOTCH1 activity by modifying O-fucose residues at specific EGF-like domains resulting in inhibition of NOTCH1 activation by JAG1 and enhancement of NOTCH1 activation by DLL1 via an increase in its binding to DLL1. The protein is Beta-1,3-N-acetylglucosaminyltransferase manic fringe of Homo sapiens (Human).